We begin with the raw amino-acid sequence, 788 residues long: Putative wall-associated receptor kinase-like 11 (788 aa).

Residues 1–27 form the signal peptide; the sequence is MRCDNNYSFSILFSLLLILILDSKVVS. The Extracellular portion of the chain corresponds to 28–375; that stretch reads LSTSCQSKSV…TFNCIGNKTR (348 aa). Residues N65, N80, N121, N159, N233, N253, N278, N295, and N310 are each glycosylated (N-linked (GlcNAc...) asparagine). Residues 306–369 are atypical EGF-like; sequence CICNNVTISG…CVNLPGTFNC (64 aa). Intrachain disulfides connect C308–C321, C343–C360, and C354–C369. The N-linked (GlcNAc...) asparagine glycan is linked to N372. Residues 376–396 traverse the membrane as a helical segment; sequence VTMIGVGSAFGILVLVVGIWW. At 397-788 the chain is on the cytoplasmic side; sequence LRKFLKKRRM…QPLFPHPTWI (392 aa). The Protein kinase domain occupies 451–726; that stretch reads FSESRILGQG…KVFTDLEKIL (276 aa). Residues 457–465 and K479 each bind ATP; that span reads LGQGGQGTV. Y524 is modified (phosphotyrosine). The active-site Proton acceptor is the D576. Residues T610 and T615 each carry the phosphothreonine modification. Y623 carries the post-translational modification Phosphotyrosine.

It belongs to the protein kinase superfamily. Ser/Thr protein kinase family.

The protein localises to the membrane. The catalysed reaction is L-seryl-[protein] + ATP = O-phospho-L-seryl-[protein] + ADP + H(+). It carries out the reaction L-threonyl-[protein] + ATP = O-phospho-L-threonyl-[protein] + ADP + H(+). Putative serine/threonine-protein kinase that may function as a signaling receptor of extracellular matrix component. The polypeptide is Putative wall-associated receptor kinase-like 11 (WAKL11) (Arabidopsis thaliana (Mouse-ear cress)).